The sequence spans 177 residues: Nucleoside triphosphate/diphosphate phosphatase (177 aa).

The Proton donor role is filled by Arg-23. 6 residues coordinate Mg(2+): Asn-87, Asp-103, Asp-105, Asp-107, Asp-120, and Glu-123.

It belongs to the Ntdp family. Requires Mg(2+) as cofactor.

It catalyses the reaction a ribonucleoside 5'-triphosphate + H2O = a ribonucleoside 5'-diphosphate + phosphate + H(+). The enzyme catalyses a ribonucleoside 5'-diphosphate + H2O = a ribonucleoside 5'-phosphate + phosphate + H(+). Its function is as follows. Has nucleoside phosphatase activity towards nucleoside triphosphates and nucleoside diphosphates. The polypeptide is Nucleoside triphosphate/diphosphate phosphatase (Streptococcus thermophilus (strain CNRZ 1066)).